The primary structure comprises 412 residues: MKIYLVGGAVRDALLGLPVKDRDWVVVGSTPQEMLDAGYQQIGRDFPVFLHPQTHEEYALARTERKSGSGYTGFTCYAAPDVTLEDDLKRRDLTINALAQDDNGEIIDPYNGLGDLQNRLLRHVSPAFGEDPLRVLRVARFAARYAHLGFRIADETLALMREMTHAGELEHLTPERVWKETESALTTRNPQVFFQVLRDCGALRVLFPEIDALFGVPAPAKWHPEIDTGIHTLMTLSMAAMLSPQVDVRFATLCHDLGKGLTPPELWPRHHGHGPAGVKLVEQLCQRLRVPNEIRDLARLVAEFHDLIHTFPMLNPKTIVKLFDSIDAWRKPQRVEQLALTSEADVRGRTGFESADYPQGRWLREAWEVAQSVPTKAVVEAGFKGVEIREELTRRRIAAVASWKEQRCPKPE.

ATP contacts are provided by G8 and R11. CTP-binding residues include G8 and R11. Mg(2+) contacts are provided by D21 and D23. Residues R91, R137, and R140 each contribute to the ATP site. CTP-binding residues include R91, R137, and R140. The 102-residue stretch at 228-329 (TGIHTLMTLS…VKLFDSIDAW (102 aa)) folds into the HD domain.

This sequence belongs to the tRNA nucleotidyltransferase/poly(A) polymerase family. Bacterial CCA-adding enzyme type 1 subfamily. Monomer. Can also form homodimers and oligomers. It depends on Mg(2+) as a cofactor. Ni(2+) is required as a cofactor.

It catalyses the reaction a tRNA precursor + 2 CTP + ATP = a tRNA with a 3' CCA end + 3 diphosphate. The enzyme catalyses a tRNA with a 3' CCA end + 2 CTP + ATP = a tRNA with a 3' CCACCA end + 3 diphosphate. Its function is as follows. Catalyzes the addition and repair of the essential 3'-terminal CCA sequence in tRNAs without using a nucleic acid template. Adds these three nucleotides in the order of C, C, and A to the tRNA nucleotide-73, using CTP and ATP as substrates and producing inorganic pyrophosphate. tRNA 3'-terminal CCA addition is required both for tRNA processing and repair. Also involved in tRNA surveillance by mediating tandem CCA addition to generate a CCACCA at the 3' terminus of unstable tRNAs. While stable tRNAs receive only 3'-terminal CCA, unstable tRNAs are marked with CCACCA and rapidly degraded. The protein is Multifunctional CCA protein of Escherichia coli O7:K1 (strain IAI39 / ExPEC).